The following is a 225-amino-acid chain: Membrin-11 (225 aa).

Residue Ala-2 is modified to N-acetylalanine. Over 2–200 the chain is Cytoplasmic; the sequence is ASGIVEGGGS…VLRLIERRNR (199 aa). A helical; Anchor for type IV membrane protein transmembrane segment spans residues 201-221; the sequence is VDTWIKYAGMIATLVILYLFI. At 222-225 the chain is on the vesicular side; sequence RWTR.

The protein belongs to the GOSR2 family.

It is found in the golgi apparatus membrane. Its function is as follows. Involved in transport of proteins from the cis/medial-Golgi to the trans-Golgi network. This chain is Membrin-11 (MEMB11), found in Arabidopsis thaliana (Mouse-ear cress).